The sequence spans 222 residues: UPF0758 protein YicR (222 aa).

Positions 100–222 constitute an MPN domain; it reads PLLSPEMTRE…YVSFAERGWI (123 aa). Zn(2+) is bound by residues His-171, His-173, and Asp-184. A JAMM motif motif is present at residues 171–184; that stretch reads HNHPSGCAEPSKAD.

Belongs to the UPF0758 family. YicR subfamily.

This is UPF0758 protein YicR from Shigella dysenteriae serotype 1 (strain Sd197).